We begin with the raw amino-acid sequence, 59 residues long: Small, acid-soluble spore protein H 2 (59 aa).

It belongs to the SspH family.

The protein resides in the spore core. This Bacillus cytotoxicus (strain DSM 22905 / CIP 110041 / 391-98 / NVH 391-98) protein is Small, acid-soluble spore protein H 2.